The chain runs to 152 residues: Large-conductance mechanosensitive channel (152 aa).

A run of 3 helical transmembrane segments spans residues 26 to 46 (VLDL…VGSA), 50 to 70 (ILTP…LFIT), and 92 to 112 (IGVF…IFWL).

It belongs to the MscL family. In terms of assembly, homopentamer.

The protein localises to the cell inner membrane. Functionally, channel that opens in response to stretch forces in the membrane lipid bilayer. May participate in the regulation of osmotic pressure changes within the cell. This is Large-conductance mechanosensitive channel from Gluconobacter oxydans (strain 621H) (Gluconobacter suboxydans).